The sequence spans 507 residues: DNA replication licensing factor MCM6 (507 aa).

Positions 32 to 239 (LYHNLCTSLF…TDYAIARRIV (208 aa)) constitute an MCM domain. Residues histidine 45, serine 85, threonine 86, alanine 87, lysine 88, serine 89, and asparagine 190 each coordinate ATP. The Arginine finger motif lies at 214–217 (SRFD). ADP contacts are provided by arginine 305 and glutamate 308. The residue at position 329 (lysine 329) is an N6-acetyllysine. The interval 365–392 (GPGGINGHADSPAPVNGFNGSGEDASQE) is disordered. 3 positions are modified to phosphoserine: serine 375, serine 390, and serine 448. Phosphothreonine is present on threonine 477.

It belongs to the MCM family. In terms of assembly, component of the MCM2-7 complex. The complex forms a toroidal hexameric ring with the proposed subunit order MCM2-MCM6-MCM4-MCM7-MCM3-MCM5. Component of the CMG helicase complex, a hexameric ring of related MCM2-7 subunits stabilized by CDC45 and the tetrameric GINS complex. May interact with MCM10. Interacts with TIPIN. Interacts with CDT1. Interacts with MCMBP. Interacts with DDI2. In terms of processing, O-glycosylated (O-GlcNAcylated), in a cell cycle-dependent manner.

The protein localises to the nucleus. It localises to the chromosome. The enzyme catalyses ATP + H2O = ADP + phosphate + H(+). Acts as a component of the MCM2-7 complex (MCM complex) which is the replicative helicase essential for 'once per cell cycle' DNA replication initiation and elongation in eukaryotic cells. Core component of CDC45-MCM-GINS (CMG) helicase, the molecular machine that unwinds template DNA during replication, and around which the replisome is built. The active ATPase sites in the MCM2-7 ring are formed through the interaction surfaces of two neighboring subunits such that a critical structure of a conserved arginine finger motif is provided in trans relative to the ATP-binding site of the Walker A box of the adjacent subunit. The six ATPase active sites, however, are likely to contribute differentially to the complex helicase activity. The chain is DNA replication licensing factor MCM6 (Mcm6) from Rattus norvegicus (Rat).